A 379-amino-acid polypeptide reads, in one-letter code: Bifunctional enzyme IspD/IspF (379 aa).

The interval 1-223 (MTVAVIIVAA…RERKGLTMDV (223 aa)) is 2-C-methyl-D-erythritol 4-phosphate cytidylyltransferase. The interval 224–379 (RLGNGYDVHA…SIATVTLIGA (156 aa)) is 2-C-methyl-D-erythritol 2,4-cyclodiphosphate synthase. Positions 230 and 232 each coordinate a divalent metal cation. Residues 230–232 (DVH) and 256–257 (HS) contribute to the 4-CDP-2-C-methyl-D-erythritol 2-phosphate site. Residue His-264 coordinates a divalent metal cation. Residues 278–280 (DIG), 354–357 (TTSE), Phe-361, and Arg-364 each bind 4-CDP-2-C-methyl-D-erythritol 2-phosphate.

The protein in the N-terminal section; belongs to the IspD/TarI cytidylyltransferase family. IspD subfamily. It in the C-terminal section; belongs to the IspF family. It depends on a divalent metal cation as a cofactor.

It carries out the reaction 2-C-methyl-D-erythritol 4-phosphate + CTP + H(+) = 4-CDP-2-C-methyl-D-erythritol + diphosphate. The catalysed reaction is 4-CDP-2-C-methyl-D-erythritol 2-phosphate = 2-C-methyl-D-erythritol 2,4-cyclic diphosphate + CMP. It participates in isoprenoid biosynthesis; isopentenyl diphosphate biosynthesis via DXP pathway; isopentenyl diphosphate from 1-deoxy-D-xylulose 5-phosphate: step 2/6. Its pathway is isoprenoid biosynthesis; isopentenyl diphosphate biosynthesis via DXP pathway; isopentenyl diphosphate from 1-deoxy-D-xylulose 5-phosphate: step 4/6. Bifunctional enzyme that catalyzes the formation of 4-diphosphocytidyl-2-C-methyl-D-erythritol from CTP and 2-C-methyl-D-erythritol 4-phosphate (MEP) (IspD), and catalyzes the conversion of 4-diphosphocytidyl-2-C-methyl-D-erythritol 2-phosphate (CDP-ME2P) to 2-C-methyl-D-erythritol 2,4-cyclodiphosphate (ME-CPP) with a corresponding release of cytidine 5-monophosphate (CMP) (IspF). This Rhodobacter capsulatus (strain ATCC BAA-309 / NBRC 16581 / SB1003) protein is Bifunctional enzyme IspD/IspF.